The sequence spans 305 residues: ATP-dependent Clp protease proteolytic subunit-related protein 4, chloroplastic (305 aa).

Residues 1–68 (MEVAAATATS…SSDLCGAKLR (68 aa)) constitute a chloroplast transit peptide.

The protein belongs to the peptidase S14 family. Component of the chloroplastic Clp protease core complex which consist of at least 16 proteins: CLPP4 (3 copies), CLPP5 (3 copies), CLPR4 (2 copies), ClpP1 (1 copy), CLPP6 (1 copy), CLPR2 (1 copy), CLPT1 (1 copy), CLPT2 (1 copy) and 3 copies of CLPP3 and/or CLPR1 and/or CLPR3. The core complex is organized in two heptameric rings, one containing CLPP3,4,5,6 in a 1:2:3:1 ratio and the other CLPP1 and CLPR1,2,3,4 in a 3:1:1:1:1 ratio.

It localises to the plastid. The protein resides in the chloroplast. Its function is as follows. Involved in plastid protein homeostasis. The polypeptide is ATP-dependent Clp protease proteolytic subunit-related protein 4, chloroplastic (Arabidopsis thaliana (Mouse-ear cress)).